We begin with the raw amino-acid sequence, 509 residues long: Fumarate hydratase, mitochondrial (509 aa).

A mitochondrion-targeting transit peptide spans 1-43 (MYRSARSLHRFSASLSDLRAAQRSIKARNVCPAPGLRHQTVRM). Substrate is bound by residues 144-146 (SGT), 175-178 (HPND), 185-187 (SSN), and threonine 233. The active-site Proton donor/acceptor is the histidine 234. Residue serine 364 is part of the active site. Substrate is bound by residues serine 365 and 370–372 (KVN).

It belongs to the class-II fumarase/aspartase family. Fumarase subfamily. Homotetramer.

The protein localises to the mitochondrion. The protein resides in the cytoplasm. It localises to the cytosol. It is found in the nucleus. Its subcellular location is the chromosome. It carries out the reaction (S)-malate = fumarate + H2O. Its pathway is carbohydrate metabolism; tricarboxylic acid cycle; (S)-malate from fumarate: step 1/1. Catalyzes the reversible stereospecific interconversion of fumarate to L-malate. Experiments in other species have demonstrated that specific isoforms of this protein act in defined pathways and favor one direction over the other. In terms of biological role, catalyzes the hydration of fumarate to L-malate in the tricarboxylic acid (TCA) cycle to facilitate a transition step in the production of energy in the form of NADH. Functionally, catalyzes the dehydration of L-malate to fumarate. Fumarate metabolism in the cytosol plays a role during urea cycle and arginine metabolism; fumarate being a by-product of the urea cycle and amino-acid catabolism. Also plays a role in DNA repair by promoting non-homologous end-joining (NHEJ). In response to DNA damage translocates to the nucleus and accumulates at DNA double-strand breaks (DSBs): acts by catalyzing formation of fumarate. The sequence is that of Fumarate hydratase, mitochondrial from Danio rerio (Zebrafish).